The chain runs to 787 residues: Serine proteinase stubble (787 aa).

Residues 1-22 (MKQPTLIRPRLRHRRSTPAAAT) form a disordered region. The Cytoplasmic segment spans residues 1–58 (MKQPTLIRPRLRHRRSTPAAATKMCPKRHWLVNNRAAGSRGSGGAAARSRRSLDQIVE). Residues 59 to 80 (VLVALIVVNCLATAAAALITPP) traverse the membrane as a helical; Signal-anchor for type II membrane protein segment. The Extracellular portion of the chain corresponds to 81–787 (DSLESLGSLG…FTPWILEHVR (707 aa)). Asn-177 is a glycosylation site (N-linked (GlcNAc...) asparagine). Positions 225–516 (AGTLVIRPSG…EISDSSIPDA (292 aa)) are disordered. Low complexity-rich tracts occupy residues 262-280 (SASH…NPNS), 287-303 (QQQQ…NHWQ), 358-368 (PSTSTSTTSTS), 393-438 (SLAA…RTTT), and 449-485 (TTAT…VTSS). The span at 502–512 (GIETNEISDSS) shows a compositional bias: polar residues. Disulfide bonds link Cys-532/Cys-660 and Cys-575/Cys-591. A Peptidase S1 domain is found at 544–787 (IVGGKSAAFG…FTPWILEHVR (244 aa)). Residues His-590 and Asp-640 each act as charge relay system in the active site. Asn-672 carries N-linked (GlcNAc...) asparagine glycosylation. Disulfide bonds link Cys-704/Cys-723 and Cys-734/Cys-763. Ser-738 functions as the Charge relay system in the catalytic mechanism.

The protein belongs to the peptidase S1 family. May activate itself by proteolytic cleavage.

It localises to the membrane. In terms of biological role, hormone dependent protease required for epithelial morphogenesis, including the formation of bristles, legs, and wings. Has a dual function, detaches imaginal disk cells from extracellular matrices through its extracellular proteolytic domain and transmits an outside-to-inside signal to its intracellular domain to modify the cytoskeleton during morphogenesis. The polypeptide is Serine proteinase stubble (Sb) (Drosophila melanogaster (Fruit fly)).